A 195-amino-acid chain; its full sequence is UPF0215 protein TSIB_1161 (195 aa).

The protein belongs to the UPF0215 family.

The sequence is that of UPF0215 protein TSIB_1161 from Thermococcus sibiricus (strain DSM 12597 / MM 739).